Here is a 31-residue protein sequence, read N- to C-terminus: U8-ctenitoxin-Co1a (31 aa).

Cystine bridges form between cysteine 4–cysteine 18 and cysteine 11–cysteine 24.

Expressed by the venom gland.

It is found in the secreted. Functionally, blocks voltage-gated sodium channels (Nav). This Ctenus ornatus (Brazilian spider) protein is U8-ctenitoxin-Co1a.